The chain runs to 342 residues: Histidinol-phosphate aminotransferase 2 (342 aa).

The residue at position 206 (Lys-206) is an N6-(pyridoxal phosphate)lysine.

This sequence belongs to the class-II pyridoxal-phosphate-dependent aminotransferase family. Histidinol-phosphate aminotransferase subfamily. Pyridoxal 5'-phosphate is required as a cofactor.

It catalyses the reaction L-histidinol phosphate + 2-oxoglutarate = 3-(imidazol-4-yl)-2-oxopropyl phosphate + L-glutamate. Its pathway is amino-acid biosynthesis; L-histidine biosynthesis; L-histidine from 5-phospho-alpha-D-ribose 1-diphosphate: step 7/9. This Archaeoglobus fulgidus (strain ATCC 49558 / DSM 4304 / JCM 9628 / NBRC 100126 / VC-16) protein is Histidinol-phosphate aminotransferase 2 (hisC2).